A 1021-amino-acid polypeptide reads, in one-letter code: Receptor-like protein EIX2 (1021 aa).

A signal peptide spans 1-24 (MGKRTNPRHFLVTWSLLLLETAFG). Positions 25–109 (LTSREVNKTL…PILTGKVSPS (85 aa)) are N-cap. Topologically, residues 25–963 (LTSREVNKTL…DDDDEFSSLE (939 aa)) are extracellular. An N-linked (GlcNAc...) asparagine glycan is attached at Asn-31. LRR repeat units lie at residues 113–136 (LEYL…RFIG), 138–161 (LKRL…QFQN), 162–184 (LTSL…VWLS), 186–211 (LSSL…ITKV), 214–237 (LKEL…VANS), and 239–262 (LISL…SWLF). N-linked (GlcNAc...) asparagine glycosylation is found at Asn-145 and Asn-161. Residue Asn-236 is glycosylated (N-linked (GlcNAc...) asparagine). An N-linked (GlcNAc...) asparagine glycan is attached at Asn-263. LRR repeat units lie at residues 265–288 (STSL…RFGS), 290–313 (MYLE…SFGN), 314–337 (LTRL…LFLR), 342–365 (RKSL…VTRF), 366–388 (SSLK…RVGQ), 389–412 (VSSL…LALF), 413–436 (PSLR…IGKL), 437–459 (SQLR…MGQL), 461–483 (NLER…HFSN), 484–507 (LSSL…DWVP), 509–532 (FQLQ…LQTQ), 533–555 (NNYT…WFSN), 557–581 (PPEL…IVSK), and 583–607 (DYMI…NIQI). N-linked (GlcNAc...) asparagine glycosylation is present at Asn-313. Asn-483 carries N-linked (GlcNAc...) asparagine glycosylation. Residues Asn-534, Asn-544, Asn-564, and Asn-593 are each glycosylated (N-linked (GlcNAc...) asparagine). One copy of the LRR 21; degenerate repeat lies at 608–626 (FYLHKNHFSGSISSICRNT). LRR repeat units follow at residues 627 to 651 (IGAA…WMNM), 652 to 675 (SNLA…LGSL), 677 to 698 (NLEA…FSQC), 699 to 722 (QLLQ…IGTD), 723 to 747 (LLQL…ICQL), and 749 to 773 (FLQI…NFTI). N-linked (GlcNAc...) asparagine glycosylation is found at Asn-650 and Asn-663. Asn-770 and Asn-778 each carry an N-linked (GlcNAc...) asparagine glycan. 4 LRR repeats span residues 818 to 842 (LLYL…IAEM), 843 to 866 (RGLR…IGQM), 867 to 890 (KLLE…LSNL), and 892 to 913 (FLSV…STQL). N-linked (GlcNAc...) asparagine glycans are attached at residues Asn-849, Asn-856, and Asn-889. A C-cap/acidic domain region spans residues 914-963 (QSFDRSSYSGNAQLCGPPLEECPGYAPPIDRGSNTNPQEHDDDDEFSSLE). Residues 964-984 (FYVSMVLGFFVTFWGILGCLI) traverse the membrane as a helical segment. Residues 985-1021 (VNRSWRNAYFTFLTDMKSWLHMTSRVCFARLKGKLRN) lie on the Cytoplasmic side of the membrane.

Belongs to the RLP family. Interacts with EIX elicitor protein.

The protein localises to the cell membrane. In terms of biological role, involved in plant defense. Confers resistance to the fungal pathogen T.viride through recognition of the EIX elicitor protein. This is Receptor-like protein EIX2 from Solanum lycopersicum (Tomato).